Here is a 177-residue protein sequence, read N- to C-terminus: MSRVAKAPVVVPAGVTITLSGQDITVKGPIGELSRTIHSDVVVSQEENNIITNIVADVKGAWAQAGTTRALINNMVEGVSKGFEKKLVLQGVGYRAKAAGKSLDLSLGFSHPIKHAIPEGITCETPSQTEVTLKGCDKHLVGQTAANIRAYRKPEPYKGKGVRYVDEYVRRKEAKKK.

The protein belongs to the universal ribosomal protein uL6 family. Part of the 50S ribosomal subunit.

In terms of biological role, this protein binds to the 23S rRNA, and is important in its secondary structure. It is located near the subunit interface in the base of the L7/L12 stalk, and near the tRNA binding site of the peptidyltransferase center. The sequence is that of Large ribosomal subunit protein uL6 from Colwellia psychrerythraea (strain 34H / ATCC BAA-681) (Vibrio psychroerythus).